A 72-amino-acid polypeptide reads, in one-letter code: Translation initiation factor IF-1 (72 aa).

In terms of domain architecture, S1-like spans 1 to 72 (MAKEEAIEIE…SKGRITYRYK (72 aa)).

It belongs to the IF-1 family. As to quaternary structure, component of the 30S ribosomal translation pre-initiation complex which assembles on the 30S ribosome in the order IF-2 and IF-3, IF-1 and N-formylmethionyl-tRNA(fMet); mRNA recruitment can occur at any time during PIC assembly.

It is found in the cytoplasm. In terms of biological role, one of the essential components for the initiation of protein synthesis. Stabilizes the binding of IF-2 and IF-3 on the 30S subunit to which N-formylmethionyl-tRNA(fMet) subsequently binds. Helps modulate mRNA selection, yielding the 30S pre-initiation complex (PIC). Upon addition of the 50S ribosomal subunit IF-1, IF-2 and IF-3 are released leaving the mature 70S translation initiation complex. In Chlorobium luteolum (strain DSM 273 / BCRC 81028 / 2530) (Pelodictyon luteolum), this protein is Translation initiation factor IF-1.